A 409-amino-acid polypeptide reads, in one-letter code: Microfibrillar-associated protein 3-like (409 aa).

An N-terminal signal peptide occupies residues 1–28 (MGLQKSHLTVCLPPSVPFLILVSTLATA). The Extracellular segment spans residues 29–148 (KSVTNSTLNG…TLRVIFTSGD (120 aa)). Residues N33, N37, N67, N111, and N135 are each glycosylated (N-linked (GlcNAc...) asparagine). An Ig-like C2-type domain is found at 47–141 (PVIIARTDHI…GTINNTVTLR (95 aa)). C68 and C125 are oxidised to a cystine. A helical transmembrane segment spans residues 149 to 169 (MGVYYMVVCLVAFTIVMILNI). At 170 to 409 (TRLCMMSSHL…NTCIIYESHV (240 aa)) the chain is on the cytoplasmic side. Y287 is modified (phosphotyrosine). 4 positions are modified to phosphoserine: S298, S303, S306, and S307. The disordered stretch occupies residues 319 to 395 (VSVHPQSKRD…AHLETTEPAV (77 aa)). The segment covering 325–340 (SKRDHVDDQEGGHFEV) has biased composition (basic and acidic residues). The segment covering 356 to 373 (TAEPSTDITTTELTSEET) has biased composition (low complexity).

It is found in the cell membrane. Its subcellular location is the nucleus. The protein localises to the cytoplasm. Its function is as follows. May participate in the nuclear signaling of EGFR and MAPK1/ERK2. This is Microfibrillar-associated protein 3-like (Mfap3l) from Mus musculus (Mouse).